We begin with the raw amino-acid sequence, 147 residues long: Large ribosomal subunit protein bL9 (147 aa).

It belongs to the bacterial ribosomal protein bL9 family.

Its function is as follows. Binds to the 23S rRNA. The polypeptide is Large ribosomal subunit protein bL9 (Geotalea uraniireducens (strain Rf4) (Geobacter uraniireducens)).